The primary structure comprises 353 residues: Vomeronasal type-1 receptor 1 (353 aa).

The Extracellular segment spans residues 1 to 56 (MVGDTLKLLSPLMTRYFFLLFYSTDSSDLNENQHPLDFDEMAFGKVKSGISFLIQT). A helical transmembrane segment spans residues 57-77 (GVGILGNSFLLCFYNLILFTG). The Cytoplasmic segment spans residues 78–84 (HKLRPTD). The helical transmembrane segment at 85–105 (LILSHLALANSMVLFFKGIPQ) threads the bilayer. The Extracellular segment spans residues 106–132 (TMAAFGLKYLLNDTGCKFVFYYHRVGT). Asparagine 117 carries N-linked (GlcNAc...) asparagine glycosylation. The helical transmembrane segment at 133 to 153 (RVSLSTICLLNGFQAIKLNPS) threads the bilayer. The Cytoplasmic segment spans residues 154-169 (ICRWMEIKIRSPRFID). Residues 170–190 (FCCLLCWVPHVLMNASVLLLV) traverse the membrane as a helical segment. Residues 191–226 (NGPLNSKNSSAKNNYGYCSYKASKRFSSLHAVLYFS) lie on the Extracellular side of the membrane. A glycan (N-linked (GlcNAc...) asparagine) is linked at asparagine 198. A helical membrane pass occupies residues 227 to 247 (PDFMSLGFMVWASGSMVFFLY). The Cytoplasmic portion of the chain corresponds to 248 to 274 (RHKQQVQHNHSNRLSCRPSQETRATRT). A helical transmembrane segment spans residues 275-295 (IMVLVSSFFVFYSVHSFLTIW). At 296-303 (TTVVANPG) the chain is on the extracellular side. The helical transmembrane segment at 304–324 (QWIVNNSVLVASYFPSRSPFV) threads the bilayer. Residues 325 to 353 (LIMSDTRISQFCFACRTRKTLFPNLVVMP) are Cytoplasmic-facing.

The protein belongs to the G-protein coupled receptor 1 family.

The protein localises to the cell membrane. Putative pheromone receptor. This chain is Vomeronasal type-1 receptor 1 (VN1R1), found in Gorilla gorilla gorilla (Western lowland gorilla).